The sequence spans 458 residues: tRNA modification GTPase MnmE (458 aa).

Residues Arg26, Glu88, and Arg127 each coordinate (6S)-5-formyl-5,6,7,8-tetrahydrofolate. The TrmE-type G domain occupies 224 to 378; the sequence is GLSTAIIGRP…IEDRINQLFF (155 aa). Asn234 provides a ligand contact to K(+). GTP contacts are provided by residues 234–239, 253–259, and 278–281; these read NVGKSS, TDIAGTT, and DTAG. Ser238 lines the Mg(2+) pocket. K(+) is bound by residues Thr253, Ile255, and Thr258. A Mg(2+)-binding site is contributed by Thr259. Lys458 is a binding site for (6S)-5-formyl-5,6,7,8-tetrahydrofolate.

The protein belongs to the TRAFAC class TrmE-Era-EngA-EngB-Septin-like GTPase superfamily. TrmE GTPase family. Homodimer. Heterotetramer of two MnmE and two MnmG subunits. The cofactor is K(+).

It is found in the cytoplasm. Its function is as follows. Exhibits a very high intrinsic GTPase hydrolysis rate. Involved in the addition of a carboxymethylaminomethyl (cmnm) group at the wobble position (U34) of certain tRNAs, forming tRNA-cmnm(5)s(2)U34. The protein is tRNA modification GTPase MnmE of Streptococcus pyogenes serotype M6 (strain ATCC BAA-946 / MGAS10394).